The following is a 131-amino-acid chain: Maturin (131 aa).

Phosphotyrosine is present on tyrosine 34. A compositionally biased stretch (acidic residues) spans 107–120 (FEEYSADVEEEEPE). The disordered stretch occupies residues 107–131 (FEEYSADVEEEEPEADHPQMGVSQQ).

The protein belongs to the MTURN family. In terms of processing, phosphorylation at Tyr-34 is essential for its ability to promote megakaryocyte differentiation.

It localises to the cytoplasm. Its function is as follows. Promotes megakaryocyte differentiation by enhancing ERK and JNK signaling as well as up-regulating RUNX1 and FLI1 expression. Represses NF-kappa-B transcriptional activity by inhibiting phosphorylation of RELA at 'Ser- 536'. May be involved in early neuronal development. The chain is Maturin (MTURN) from Bos taurus (Bovine).